The following is a 151-amino-acid chain: Small ribosomal subunit protein uS9 (151 aa).

It belongs to the universal ribosomal protein uS9 family.

This Spodoptera frugiperda (Fall armyworm) protein is Small ribosomal subunit protein uS9 (RpS16).